Consider the following 227-residue polypeptide: Cytidylate kinase (227 aa).

Residue 12 to 20 coordinates ATP; sequence GPSGAGKGT.

This sequence belongs to the cytidylate kinase family. Type 1 subfamily.

It is found in the cytoplasm. It catalyses the reaction CMP + ATP = CDP + ADP. The enzyme catalyses dCMP + ATP = dCDP + ADP. In Shigella flexneri, this protein is Cytidylate kinase.